Here is a 331-residue protein sequence, read N- to C-terminus: Ornithine carbamoyltransferase (331 aa).

Residues 55-58 (STRT), Gln82, Arg106, and 133-136 (HPTQ) contribute to the carbamoyl phosphate site. Residues Asn166, Asp230, and 234–235 (SM) contribute to the L-ornithine site. Carbamoyl phosphate-binding positions include 272 to 273 (CL) and Arg317.

Belongs to the aspartate/ornithine carbamoyltransferase superfamily. OTCase family.

The protein resides in the cytoplasm. It carries out the reaction carbamoyl phosphate + L-ornithine = L-citrulline + phosphate + H(+). Its pathway is amino-acid biosynthesis; L-arginine biosynthesis; L-arginine from L-ornithine and carbamoyl phosphate: step 1/3. In terms of biological role, reversibly catalyzes the transfer of the carbamoyl group from carbamoyl phosphate (CP) to the N(epsilon) atom of ornithine (ORN) to produce L-citrulline. This chain is Ornithine carbamoyltransferase (argF), found in Neisseria meningitidis serogroup B (strain ATCC BAA-335 / MC58).